Here is a 1372-residue protein sequence, read N- to C-terminus: DNA-directed RNA polymerase subunit beta' (1372 aa).

Zn(2+) is bound by residues cysteine 69, cysteine 71, cysteine 84, and cysteine 87. 3 residues coordinate Mg(2+): aspartate 460, aspartate 462, and aspartate 464. Residues cysteine 808, cysteine 882, cysteine 889, and cysteine 892 each contribute to the Zn(2+) site.

Belongs to the RNA polymerase beta' chain family. The RNAP catalytic core consists of 2 alpha, 1 beta, 1 beta' and 1 omega subunit. When a sigma factor is associated with the core the holoenzyme is formed, which can initiate transcription. It depends on Mg(2+) as a cofactor. The cofactor is Zn(2+).

The catalysed reaction is RNA(n) + a ribonucleoside 5'-triphosphate = RNA(n+1) + diphosphate. Functionally, DNA-dependent RNA polymerase catalyzes the transcription of DNA into RNA using the four ribonucleoside triphosphates as substrates. The chain is DNA-directed RNA polymerase subunit beta' from Rickettsia rickettsii (strain Iowa).